We begin with the raw amino-acid sequence, 204 residues long: N-(5'-phosphoribosyl)anthranilate isomerase (204 aa).

It belongs to the TrpF family.

It carries out the reaction N-(5-phospho-beta-D-ribosyl)anthranilate = 1-(2-carboxyphenylamino)-1-deoxy-D-ribulose 5-phosphate. It functions in the pathway amino-acid biosynthesis; L-tryptophan biosynthesis; L-tryptophan from chorismate: step 3/5. The polypeptide is N-(5'-phosphoribosyl)anthranilate isomerase (Bacillus cereus (strain B4264)).